A 212-amino-acid chain; its full sequence is Phosphoenolpyruvate guanylyltransferase (212 aa).

Phosphoenolpyruvate is bound by residues T139, G155, and S158.

Belongs to the CofC family.

It carries out the reaction phosphoenolpyruvate + GTP + H(+) = enolpyruvoyl-2-diphospho-5'-guanosine + diphosphate. Its pathway is cofactor biosynthesis; coenzyme F420 biosynthesis. In terms of biological role, guanylyltransferase that catalyzes the activation of phosphoenolpyruvate (PEP) as enolpyruvoyl-2-diphospho-5'-guanosine, via the condensation of PEP with GTP. It is involved in the biosynthesis of coenzyme F420, a hydride carrier cofactor. This Streptomyces coelicolor (strain ATCC BAA-471 / A3(2) / M145) protein is Phosphoenolpyruvate guanylyltransferase.